We begin with the raw amino-acid sequence, 321 residues long: Sideroflexin-3 (321 aa).

Position 1 is an N-acetylmethionine (Met1). The next 4 helical transmembrane spans lie at 146-164, 174-194, 226-246, and 266-286; these read LGTA…ALGL, LVGR…NIPL, FQVV…PPLI, and LQVG…CALF.

The protein belongs to the sideroflexin family.

It localises to the mitochondrion membrane. The enzyme catalyses L-serine(in) = L-serine(out). Mitochondrial serine transporter that mediates transport of serine into mitochondria, an important step of the one-carbon metabolism pathway. Mitochondrial serine is converted to glycine and formate, which then exits to the cytosol where it is used to generate the charged folates that serve as one-carbon donors. In Homo sapiens (Human), this protein is Sideroflexin-3.